The chain runs to 487 residues: Serine/threonine-protein kinase 4 (487 aa).

Position 1 is an N-acetylmethionine (M1). The residue at position 3 (T3) is a Phosphothreonine. A Protein kinase domain is found at 30–281; it reads FDVLEKLGEG…ATQLLQHPFV (252 aa). ATP is bound by residues 36–44 and K59; that span reads LGEGSYGSV. The active-site Proton acceptor is D149. T183 carries the post-translational modification Phosphothreonine; by autocatalysis. The residue at position 265 (S265) is a Phosphoserine. Residues 290–310 are a coiled coil; the sequence is LRDLINEAMDVKLKRQESQQR. Residues 303–312 are compositionally biased toward basic and acidic residues; that stretch reads KRQESQQREV. Residues 303–332 are disordered; that stretch reads KRQESQQREVDQDDEENSEEDEMDSGTMVR. Over residues 313–326 the composition is skewed to acidic residues; the sequence is DQDDEENSEEDEMD. S320 is subject to Phosphoserine. 2 positions are modified to phosphothreonine: T340 and T367. T387 bears the Phosphothreonine; by PKB/AKT1 mark. Phosphoserine is present on residues S410 and S414. Y433 is modified (phosphotyrosine). One can recognise an SARAH domain in the interval 433 to 480; it reads YEFLKSWTVEDLQKRLLALDPMMEQEIEEIRQKYQSKRQPILDAIEAK.

Belongs to the protein kinase superfamily. STE Ser/Thr protein kinase family. STE20 subfamily. Homodimer; mediated via the coiled-coil region. Interacts with NORE1, which inhibits autoactivation. Interacts with and stabilizes SAV1. Interacts with RASSF1. Interacts with FOXO3. Interacts with RASSF2 (via SARAH domain). Interacts with AR, PKB/AKT1, TNNI3 and SIRT1. Interacts with DLG5 (via PDZ domain 3). Interacts with MARK3 and SCRIB in the presence of DLG5. Mg(2+) serves as cofactor. Post-translationally, autophosphorylated on serine and threonine residues. Phosphorylation at Thr-387 by PKB/AKT1, leads to inhibition of its: kinase activity, nuclear translocation and autophosphorylation at Thr-183. It also diminishes its cleavage by caspases and its ability to phosphorylate FOXO3. Proteolytically cleaved by caspase-3 during apoptosis at Asp-326 and Asp-349 resulting in a 37 kDa or a 39 kDa subunit respectively. The 39 kDa subunit is further cleaved into the 37 kDa form. Proteolytic cleavage results in kinase activation and nuclear translocation of the truncated form (MST1/N). It is less likely that cleavage at Asp-349 is a prerequisite for activation as this site is not conserved in the murine ortholog.

The protein localises to the cytoplasm. Its subcellular location is the nucleus. It catalyses the reaction L-seryl-[protein] + ATP = O-phospho-L-seryl-[protein] + ADP + H(+). It carries out the reaction L-threonyl-[protein] + ATP = O-phospho-L-threonyl-[protein] + ADP + H(+). Its activity is regulated as follows. Inhibited by the C-terminal non-catalytic region. Activated by caspase-cleavage. Full activation also requires homodimerization and autophosphorylation of Thr-183. Activated by RASSF1 which acts by preventing its dephosphorylation. Functionally, stress-activated, pro-apoptotic kinase which, following caspase-cleavage, enters the nucleus and induces chromatin condensation followed by internucleosomal DNA fragmentation. Key component of the Hippo signaling pathway which plays a pivotal role in organ size control and tumor suppression by restricting proliferation and promoting apoptosis. The core of this pathway is composed of a kinase cascade wherein STK3/MST2 and STK4/MST1, in complex with its regulatory protein SAV1, phosphorylates and activates LATS1/2 in complex with its regulatory protein MOB1, which in turn phosphorylates and inactivates YAP1 oncoprotein and WWTR1/TAZ. Phosphorylation of YAP1 by LATS2 inhibits its translocation into the nucleus to regulate cellular genes important for cell proliferation, cell death, and cell migration. STK3/MST2 and STK4/MST1 are required to repress proliferation of mature hepatocytes, to prevent activation of facultative adult liver stem cells (oval cells), and to inhibit tumor formation. Phosphorylates 'Ser-14' of histone H2B (H2BS14ph) during apoptosis. Phosphorylates FOXO3 upon oxidative stress, which results in its nuclear translocation and cell death initiation. Phosphorylates MOBKL1A, MOBKL1B and RASSF2. Phosphorylates TNNI3 (cardiac Tn-I) and alters its binding affinity to TNNC1 (cardiac Tn-C) and TNNT2 (cardiac Tn-T). Phosphorylates FOXO1 on 'Ser-212' and regulates its activation and stimulates transcription of PMAIP1 in a FOXO1-dependent manner. Phosphorylates SIRT1 and inhibits SIRT1-mediated p53/TP53 deacetylation, thereby promoting p53/TP53 dependent transcription and apoptosis upon DNA damage. Acts as an inhibitor of PKB/AKT1. Phosphorylates AR on 'Ser-650' and suppresses its activity by intersecting with PKB/AKT1 signaling and antagonizing formation of AR-chromatin complexes. This is Serine/threonine-protein kinase 4 (STK4) from Aotus nancymaae (Ma's night monkey).